Consider the following 447-residue polypeptide: Tubulin beta-1 chain (447 aa).

Gln-11, Glu-69, Ser-138, Gly-142, Thr-143, Gly-144, Asn-204, and Asn-226 together coordinate GTP. Glu-69 contacts Mg(2+). A compositionally biased stretch (polar residues) spans 411–427 (AESNMNDLVSEYQQYQD). Residues 411 to 447 (AESNMNDLVSEYQQYQDATADEEGDYEDEEEQVPEDE) form a disordered region. Over residues 429–447 (TADEEGDYEDEEEQVPEDE) the composition is skewed to acidic residues.

This sequence belongs to the tubulin family. In terms of assembly, dimer of alpha and beta chains. A typical microtubule is a hollow water-filled tube with an outer diameter of 25 nm and an inner diameter of 15 nM. Alpha-beta heterodimers associate head-to-tail to form protofilaments running lengthwise along the microtubule wall with the beta-tubulin subunit facing the microtubule plus end conferring a structural polarity. Microtubules usually have 13 protofilaments but different protofilament numbers can be found in some organisms and specialized cells. Mg(2+) is required as a cofactor. Expressed in leaf sheaths.

It localises to the cytoplasm. The protein localises to the cytoskeleton. Its function is as follows. Tubulin is the major constituent of microtubules, a cylinder consisting of laterally associated linear protofilaments composed of alpha- and beta-tubulin heterodimers. Microtubules grow by the addition of GTP-tubulin dimers to the microtubule end, where a stabilizing cap forms. Below the cap, tubulin dimers are in GDP-bound state, owing to GTPase activity of alpha-tubulin. The protein is Tubulin beta-1 chain (TUBB1) of Oryza sativa subsp. japonica (Rice).